A 257-amino-acid polypeptide reads, in one-letter code: Deoxyribose-phosphate aldolase (257 aa).

Asp-102 serves as the catalytic Proton donor/acceptor. Residue Lys-166 is the Schiff-base intermediate with acetaldehyde of the active site. Lys-198 acts as the Proton donor/acceptor in catalysis.

Belongs to the DeoC/FbaB aldolase family. DeoC type 2 subfamily.

The protein localises to the cytoplasm. It catalyses the reaction 2-deoxy-D-ribose 5-phosphate = D-glyceraldehyde 3-phosphate + acetaldehyde. The protein operates within carbohydrate degradation; 2-deoxy-D-ribose 1-phosphate degradation; D-glyceraldehyde 3-phosphate and acetaldehyde from 2-deoxy-alpha-D-ribose 1-phosphate: step 2/2. Catalyzes a reversible aldol reaction between acetaldehyde and D-glyceraldehyde 3-phosphate to generate 2-deoxy-D-ribose 5-phosphate. This chain is Deoxyribose-phosphate aldolase, found in Shewanella sediminis (strain HAW-EB3).